Reading from the N-terminus, the 684-residue chain is DNA ligase (684 aa).

NAD(+)-binding positions include 34-38 (DYDFD), 83-84 (SL), and glutamate 117. The N6-AMP-lysine intermediate role is filled by lysine 119. NAD(+) contacts are provided by arginine 140, glutamate 188, lysine 301, and lysine 325. Cysteine 419, cysteine 422, cysteine 437, and cysteine 443 together coordinate Zn(2+). The region spanning 602 to 684 (DAPQTFAGMT…QTMLAAESGD (83 aa)) is the BRCT domain.

It belongs to the NAD-dependent DNA ligase family. LigA subfamily. Mg(2+) serves as cofactor. Mn(2+) is required as a cofactor.

The enzyme catalyses NAD(+) + (deoxyribonucleotide)n-3'-hydroxyl + 5'-phospho-(deoxyribonucleotide)m = (deoxyribonucleotide)n+m + AMP + beta-nicotinamide D-nucleotide.. Functionally, DNA ligase that catalyzes the formation of phosphodiester linkages between 5'-phosphoryl and 3'-hydroxyl groups in double-stranded DNA using NAD as a coenzyme and as the energy source for the reaction. It is essential for DNA replication and repair of damaged DNA. The protein is DNA ligase of Chloroherpeton thalassium (strain ATCC 35110 / GB-78).